Reading from the N-terminus, the 184-residue chain is ATP-dependent protease subunit HslV (184 aa).

Residue Thr12 is part of the active site. Ala166, Cys169, and Thr172 together coordinate Na(+).

The protein belongs to the peptidase T1B family. HslV subfamily. As to quaternary structure, a double ring-shaped homohexamer of HslV is capped on each side by a ring-shaped HslU homohexamer. The assembly of the HslU/HslV complex is dependent on binding of ATP.

It is found in the cytoplasm. The catalysed reaction is ATP-dependent cleavage of peptide bonds with broad specificity.. With respect to regulation, allosterically activated by HslU binding. Its function is as follows. Protease subunit of a proteasome-like degradation complex believed to be a general protein degrading machinery. The polypeptide is ATP-dependent protease subunit HslV (Brucella ovis (strain ATCC 25840 / 63/290 / NCTC 10512)).